Consider the following 246-residue polypeptide: Pyridoxine 5'-phosphate synthase (246 aa).

3-amino-2-oxopropyl phosphate is bound at residue asparagine 12. 14–15 is a 1-deoxy-D-xylulose 5-phosphate binding site; it reads DH. Arginine 23 is a 3-amino-2-oxopropyl phosphate binding site. The active-site Proton acceptor is the histidine 48. 1-deoxy-D-xylulose 5-phosphate contacts are provided by arginine 50 and histidine 55. The Proton acceptor role is filled by glutamate 75. Residue threonine 105 coordinates 1-deoxy-D-xylulose 5-phosphate. The active-site Proton donor is histidine 196. Residues glycine 197 and 218-219 each bind 3-amino-2-oxopropyl phosphate; that span reads GH.

The protein belongs to the PNP synthase family. Homooctamer; tetramer of dimers.

It localises to the cytoplasm. It carries out the reaction 3-amino-2-oxopropyl phosphate + 1-deoxy-D-xylulose 5-phosphate = pyridoxine 5'-phosphate + phosphate + 2 H2O + H(+). It participates in cofactor biosynthesis; pyridoxine 5'-phosphate biosynthesis; pyridoxine 5'-phosphate from D-erythrose 4-phosphate: step 5/5. Catalyzes the complicated ring closure reaction between the two acyclic compounds 1-deoxy-D-xylulose-5-phosphate (DXP) and 3-amino-2-oxopropyl phosphate (1-amino-acetone-3-phosphate or AAP) to form pyridoxine 5'-phosphate (PNP) and inorganic phosphate. In Nitrosococcus oceani (strain ATCC 19707 / BCRC 17464 / JCM 30415 / NCIMB 11848 / C-107), this protein is Pyridoxine 5'-phosphate synthase.